Reading from the N-terminus, the 255-residue chain is MNINKIALIYNKNSKHLAIIEEIKKLYNYCKIEEAEVIIIIGGDGELLHNIHRYMHLNIPFYGLNLGSLGFLMNPLDTKKLLQNIYESTVSILHPLLMQVEDTSGQIYKALAINEVSIFRKTNQVAKFRIDVNGVERMSELVADGALVATPAGSSAYNLSAGGPILPLASNMLCLTPICSFRPRRWHGALLLSTDTIKFEILNITKRPVNATADFQEFNNITRVTVKSTKDKYIKLLFNKNHTLEDRIIKEQFGE.

Asp44 acts as the Proton acceptor in catalysis. Residues 44-45 (DG), His49, 114-115 (NE), Asp144, Ala152, 155-160 (SAYNLS), and Gln216 contribute to the NAD(+) site.

It belongs to the NAD kinase family. It depends on a divalent metal cation as a cofactor.

The protein localises to the cytoplasm. It carries out the reaction NAD(+) + ATP = ADP + NADP(+) + H(+). In terms of biological role, involved in the regulation of the intracellular balance of NAD and NADP, and is a key enzyme in the biosynthesis of NADP. Catalyzes specifically the phosphorylation on 2'-hydroxyl of the adenosine moiety of NAD to yield NADP. The sequence is that of NAD kinase from Rickettsia prowazekii (strain Madrid E).